A 365-amino-acid polypeptide reads, in one-letter code: MLKKVTPLFLVAAVAACSSPLERRQANGGEDYVQAEQAPMLKIPEGLKTPPYNKEYDVPALGPKANPALVGKNLDIRPPLQVLPMAEGTHVEEGSDNIKIVVESIDNNVDLKQEIFTNLDDFFAKQAIPIRSRDFDKGSIETDWIESREVLESSLWGSDKEYLLRQRYRFDVETRPHGRTANIVIHLVEHEEFYDGKEQKVMLSGEDKQRYTIDMLNSAIAYMSVKREQTIQANRLKQTLGINVDLITPEEGAAYWSAKAAYKQVWDRLRIVLPEMGFEISDMDSAKGLYFIKFTDNSGFWSSLWNNNQLSLKEGSYRLLLEDGDTPDETKIWLRDAEDQPLSNDVVSKVYESLSSLMKEERKLR.

Residues 1 to 16 form the signal peptide; it reads MLKKVTPLFLVAAVAA. Residue C17 is the site of N-palmitoyl cysteine attachment. The S-diacylglycerol cysteine moiety is linked to residue C17.

Belongs to the BamC family. Part of the Bam complex.

The protein resides in the cell outer membrane. Part of the outer membrane protein assembly complex, which is involved in assembly and insertion of beta-barrel proteins into the outer membrane. The chain is Outer membrane protein assembly factor BamC from Shewanella oneidensis (strain ATCC 700550 / JCM 31522 / CIP 106686 / LMG 19005 / NCIMB 14063 / MR-1).